The primary structure comprises 86 residues: uncharacterized protein (86 aa).

This is an uncharacterized protein from Saccharomyces cerevisiae (strain ATCC 204508 / S288c) (Baker's yeast).